Consider the following 75-residue polypeptide: DNA-directed RNA polymerase subunit omega (75 aa).

Belongs to the RNA polymerase subunit omega family. In terms of assembly, in cyanobacteria the RNAP catalytic core is composed of 2 alpha, 1 beta, 1 beta', 1 gamma and 1 omega subunit. When a sigma factor is associated with the core the holoenzyme is formed, which can initiate transcription.

The catalysed reaction is RNA(n) + a ribonucleoside 5'-triphosphate = RNA(n+1) + diphosphate. Its function is as follows. Promotes RNA polymerase assembly. Latches the N- and C-terminal regions of the beta' subunit thereby facilitating its interaction with the beta and alpha subunits. The chain is DNA-directed RNA polymerase subunit omega from Picosynechococcus sp. (strain ATCC 27264 / PCC 7002 / PR-6) (Agmenellum quadruplicatum).